The chain runs to 152 residues: Transcriptional repressor NrdR (152 aa).

The segment at 3–34 is a zinc-finger region; sequence CCYCGHGESKVLETRSAEEGRVIRRRRECMEC. The 91-residue stretch at 49–139 folds into the ATP-cone domain; it reads LIVRKKGGSL…VYRQFTDVGR (91 aa).

Belongs to the NrdR family. Zn(2+) is required as a cofactor.

Its function is as follows. Negatively regulates transcription of bacterial ribonucleotide reductase nrd genes and operons by binding to NrdR-boxes. This Heliobacterium modesticaldum (strain ATCC 51547 / Ice1) protein is Transcriptional repressor NrdR.